The chain runs to 37 residues: Small ribosomal subunit protein uS19 (37 aa).

Belongs to the universal ribosomal protein uS19 family.

The polypeptide is Small ribosomal subunit protein uS19 (RPS15) (Helix lucorum (Snail)).